The sequence spans 297 residues: 4-hydroxy-tetrahydrodipicolinate synthase (297 aa).

Position 50 (Thr50) interacts with pyruvate. Residue Tyr138 is the Proton donor/acceptor of the active site. Catalysis depends on Lys166, which acts as the Schiff-base intermediate with substrate. Ile208 contributes to the pyruvate binding site.

The protein belongs to the DapA family. As to quaternary structure, homotetramer; dimer of dimers.

It localises to the cytoplasm. The catalysed reaction is L-aspartate 4-semialdehyde + pyruvate = (2S,4S)-4-hydroxy-2,3,4,5-tetrahydrodipicolinate + H2O + H(+). It participates in amino-acid biosynthesis; L-lysine biosynthesis via DAP pathway; (S)-tetrahydrodipicolinate from L-aspartate: step 3/4. Its function is as follows. Catalyzes the condensation of (S)-aspartate-beta-semialdehyde [(S)-ASA] and pyruvate to 4-hydroxy-tetrahydrodipicolinate (HTPA). This is 4-hydroxy-tetrahydrodipicolinate synthase from Desulfotalea psychrophila (strain LSv54 / DSM 12343).